We begin with the raw amino-acid sequence, 383 residues long: Heme A synthase (383 aa).

8 helical membrane passes run 38–58, 127–147, 153–173, 187–207, 230–250, 287–307, 321–341, and 344–364; these read VRVWLMMLFGLVVIMIAVGGL, VIGLVWALGFFGFLVTRKIPP, LFLLGVLGGLQGAIGWWMVAS, LATHLGLAFFILGLIAWYIMV, ANWLMGLAAVQILLGALVAGI, LVQFNHRMVGYLLLLVGLYVW, AFDWVAVILFGQMVLGIVTVL, and APWTWAIAHQFGAVVTICLIL. His292 serves as a coordination point for heme. His352 provides a ligand contact to heme.

It belongs to the COX15/CtaA family. Type 2 subfamily. As to quaternary structure, interacts with CtaB. Heme b is required as a cofactor.

Its subcellular location is the cell membrane. It catalyses the reaction Fe(II)-heme o + 2 A + H2O = Fe(II)-heme a + 2 AH2. It functions in the pathway porphyrin-containing compound metabolism; heme A biosynthesis; heme A from heme O: step 1/1. In terms of biological role, catalyzes the conversion of heme O to heme A by two successive hydroxylations of the methyl group at C8. The first hydroxylation forms heme I, the second hydroxylation results in an unstable dihydroxymethyl group, which spontaneously dehydrates, resulting in the formyl group of heme A. In Dinoroseobacter shibae (strain DSM 16493 / NCIMB 14021 / DFL 12), this protein is Heme A synthase.